Consider the following 169-residue polypeptide: N5-carboxyaminoimidazole ribonucleotide mutase (169 aa).

Residues S16, D19, and R46 each contribute to the substrate site.

The protein belongs to the AIR carboxylase family. Class I subfamily.

It catalyses the reaction 5-carboxyamino-1-(5-phospho-D-ribosyl)imidazole + H(+) = 5-amino-1-(5-phospho-D-ribosyl)imidazole-4-carboxylate. Its pathway is purine metabolism; IMP biosynthesis via de novo pathway; 5-amino-1-(5-phospho-D-ribosyl)imidazole-4-carboxylate from 5-amino-1-(5-phospho-D-ribosyl)imidazole (N5-CAIR route): step 2/2. Functionally, catalyzes the conversion of N5-carboxyaminoimidazole ribonucleotide (N5-CAIR) to 4-carboxy-5-aminoimidazole ribonucleotide (CAIR). This Escherichia coli O157:H7 protein is N5-carboxyaminoimidazole ribonucleotide mutase.